The following is a 489-amino-acid chain: 3-octaprenyl-4-hydroxybenzoate carboxy-lyase (489 aa).

Position 172 (asparagine 172) interacts with Mn(2+). Prenylated FMN-binding positions include 175-177 (IYR), 189-191 (RWL), and 194-195 (RG). Glutamate 238 is a Mn(2+) binding site. The Proton donor role is filled by aspartate 287.

This sequence belongs to the UbiD family. In terms of assembly, homohexamer. The cofactor is prenylated FMN. It depends on Mn(2+) as a cofactor.

The protein localises to the cell membrane. The catalysed reaction is a 4-hydroxy-3-(all-trans-polyprenyl)benzoate + H(+) = a 2-(all-trans-polyprenyl)phenol + CO2. It participates in cofactor biosynthesis; ubiquinone biosynthesis. Catalyzes the decarboxylation of 3-octaprenyl-4-hydroxy benzoate to 2-octaprenylphenol, an intermediate step in ubiquinone biosynthesis. This chain is 3-octaprenyl-4-hydroxybenzoate carboxy-lyase, found in Aeromonas salmonicida (strain A449).